Here is a 129-residue protein sequence, read N- to C-terminus: Small ribosomal subunit protein uS8 (129 aa).

It belongs to the universal ribosomal protein uS8 family. As to quaternary structure, part of the 30S ribosomal subunit.

Its function is as follows. One of the primary rRNA binding proteins, it binds directly to 16S rRNA central domain where it helps coordinate assembly of the platform of the 30S subunit. The polypeptide is Small ribosomal subunit protein uS8 (Methanothrix thermoacetophila (strain DSM 6194 / JCM 14653 / NBRC 101360 / PT) (Methanosaeta thermophila)).